The chain runs to 296 residues: HTH-type transcriptional regulator IlvR (296 aa).

In terms of domain architecture, HTH lysR-type spans 1–58 (MDIRQFRHFAAVAETLHFGRAAERLGITQPPLSQSIQALEKALGAPLFARTKRHVELT). Residues 18–37 (FGRAAERLGITQPPLSQSIQ) constitute a DNA-binding region (H-T-H motif).

This sequence belongs to the LysR transcriptional regulatory family.

In terms of biological role, positively regulates the expression of the ilvD gene while negatively autoregulating its own expression. This Caulobacter vibrioides (strain ATCC 19089 / CIP 103742 / CB 15) (Caulobacter crescentus) protein is HTH-type transcriptional regulator IlvR (ilvR).